The sequence spans 235 residues: dITP/XTP pyrophosphatase (235 aa).

Position 7 to 12 (S7 to K12) interacts with substrate. D70 (proton acceptor) is an active-site residue. D70 lines the Mg(2+) pocket. Substrate contacts are provided by residues S71, F180–D183, K211, and H216–R217.

The protein belongs to the HAM1 NTPase family. Homodimer. Mg(2+) serves as cofactor.

It catalyses the reaction XTP + H2O = XMP + diphosphate + H(+). The enzyme catalyses dITP + H2O = dIMP + diphosphate + H(+). It carries out the reaction ITP + H2O = IMP + diphosphate + H(+). Functionally, pyrophosphatase that catalyzes the hydrolysis of nucleoside triphosphates to their monophosphate derivatives, with a high preference for the non-canonical purine nucleotides XTP (xanthosine triphosphate), dITP (deoxyinosine triphosphate) and ITP. Seems to function as a house-cleaning enzyme that removes non-canonical purine nucleotides from the nucleotide pool, thus preventing their incorporation into DNA/RNA and avoiding chromosomal lesions. The chain is dITP/XTP pyrophosphatase from Anaeromyxobacter dehalogenans (strain 2CP-C).